Here is a 212-residue protein sequence, read N- to C-terminus: External core antigen (212 aa).

The signal sequence occupies residues 1–19; that stretch reads MQLFHLCLIISCSCPTVQA. The HBEAG stretch occupies residues 25-27; sequence GWL. Residues 179-212 are disordered; it reads RQRGRTIRRRTPSPRRRRSQSPRRRRSQSRESQC. Positions 180–205 are enriched in basic residues; sequence QRGRTIRRRTPSPRRRRSQSPRRRRS. The 1; half-length repeat unit spans residues 184–190; sequence TIRRRTP. Residues 184-206 form a 3 X 8 AA repeats of S-P-R-R-R-R-S-Q region; it reads TIRRRTPSPRRRRSQSPRRRRSQ. A propeptide spanning residues 184–212 is cleaved from the precursor; it reads TIRRRTPSPRRRRSQSPRRRRSQSRESQC. A run of 2 repeats spans residues 191–198 and 199–206.

The protein belongs to the orthohepadnavirus precore antigen family. In terms of assembly, homodimerizes. In terms of processing, phosphorylated. Post-translationally, cleaved by host furin.

The protein localises to the secreted. Its subcellular location is the host nucleus. May regulate immune response to the intracellular capsid in acting as a T-cell tolerogen, by having an immunoregulatory effect which prevents destruction of infected cells by cytotoxic T-cells. This immune regulation may predispose to chronicity during perinatal infections and prevent severe liver injury during adult infections. This is External core antigen from Hepatitis B virus genotype D subtype ayw (isolate Australia/AustKW/1991) (HBV-D).